We begin with the raw amino-acid sequence, 612 residues long: MNKFCLLPFHGKRIGVANIPFTILLKKGPYFLHSHITAVYYSTKGKNDSHEQSRVSKKSTFTPLETPWYLRIVDNEKELMEGKKNNHHTMNKELEIPKTSPNSLRKIADLLTGKLGLDDFLVFDLRKKSPNSVSAVNKLGDFMVICTARSTKHCHKSFLELNKFLKHEFCSSAYVEGNFNERQESRRKRRLARKSNLSKLLGRSSECSAKDLNSEAWYMIDCRVDGIFVNILTQRRRNELNLEELYAPENEKSKFQNIDSGNVPTISGVNEISSNNNILLGLRRLAQQRRRYSTINPNGLSNLRYFLQKEDFKGANKIIQSSSGTETHNIRTLEHVKNTLKDLVGQEKKVDVVQWKSLFDEHSTFLTINQSAAYWPLRLEYAILLNKADPQFYSDRVFLKDYLLLKKSLGQELIREDLIALLEMVLKTQHSSHSYFNLVKQNRVIIRALNLFKGLQTEDNGSVVYDEEVISLLLNSMVADERVKLRSLYETIDHIFQTFGDKLTSGMIVSILQNLAKIKDWNKLLQVWEAITPTEGEGQDKRPWNEFINVINQSGDSHVISKIVNNGHLLWIRRLNVNVTPELCNSIKALLKTAGMENSTLEEFLVRGKNNQ.

Residues 1–14 (MNKFCLLPFHGKRI) constitute a mitochondrion transit peptide.

The protein belongs to the ATP25 family.

The protein resides in the mitochondrion inner membrane. Functionally, mRNA stabilization factor specific for the 0.95 kb OLI1 mRNA. Also involved in OLI1 ring formation. In Saccharomyces cerevisiae (strain YJM789) (Baker's yeast), this protein is ATPase synthesis protein 25, mitochondrial (ATP25).